The following is a 211-amino-acid chain: MQSAMFLAVQHDCRPMDKSAGSGHKSEEKREKMKRTLLKDWKTRLSYFLQNSSTPGKPKTGKKSKQQAFIKPSPEEAQLWSEAFDELLASKYGLAAFRAFLKSEFCEENIEFWLACEDFKKTKSPQKLSSKARKIYTDFIEKEAPKEINIDFQTKTLIAQNIQEATSGCFTTAQKRVYSLMENNSYPRFLESEFYQDLCKKPQITTEPHAT.

2 disordered regions span residues 14 to 33 and 49 to 68; these read RPMD…REKM and LQNS…KQQA. The tract at residues 32–66 is necessary for membrane association; sequence KMKRTLLKDWKTRLSYFLQNSSTPGKPKTGKKSKQ. Positions 79–116 are necessary to inhibit protein synthesis; that stretch reads LWSEAFDELLASKYGLAAFRAFLKSEFCEENIEFWLAC. Positions 83–199 constitute an RGS domain; that stretch reads AFDELLASKY…LESEFYQDLC (117 aa).

In terms of assembly, interacts with GNAQ. Does not interact with GNAI1 and GNAI3. Interacts with EIF2B5. Interacts with PRKG1 (isoform alpha). Phosphorylated by protein kinase C. Phosphorylation by PRKG1 leads to activation of RGS2 activity. In terms of tissue distribution, expressed in acute myelogenous leukemia (AML) and in acute lymphoblastic leukemia (ALL).

It is found in the cell membrane. The protein localises to the cytoplasm. Its subcellular location is the nucleus. The protein resides in the nucleolus. It localises to the mitochondrion. In terms of biological role, regulates G protein-coupled receptor signaling cascades. Inhibits signal transduction by increasing the GTPase activity of G protein alpha subunits, thereby driving them into their inactive GDP-bound form. It is involved in the negative regulation of the angiotensin-activated signaling pathway. Plays a role in the regulation of blood pressure in response to signaling via G protein-coupled receptors and GNAQ. Plays a role in regulating the constriction and relaxation of vascular smooth muscle. Binds EIF2B5 and blocks its activity, thereby inhibiting the translation of mRNA into protein. The sequence is that of Regulator of G-protein signaling 2 (RGS2) from Homo sapiens (Human).